Reading from the N-terminus, the 350-residue chain is ADP-ribose pyrophosphatase, mitochondrial (350 aa).

A mitochondrion-targeting transit peptide spans 1–46; that stretch reads MAGRSLGKAVATVSLSVALASVTVRSSGCRAIPAPRNPFPSCGFHL. 2 disordered regions span residues 53–77 and 116–153; these read GSNG…KVER and SESS…PAGR. Residue S121 is modified to Phosphoserine. Positions 124–135 are enriched in basic and acidic residues; sequence FNEKDGHVERKS. The 157-residue stretch at 178 to 334 folds into the Nudix hydrolase domain; the sequence is WKRDESGNKI…SQFIKLVAEK (157 aa). A Nudix box motif is present at residues 215 to 237; it reads GMVDPGEKISATLKREFGEEALN.

This sequence belongs to the Nudix hydrolase family. NudF subfamily. In terms of assembly, monomer. Interacts with GLOD4. Requires Mg(2+) as cofactor. It depends on Mn(2+) as a cofactor.

It localises to the mitochondrion. It catalyses the reaction ADP-D-ribose + H2O = D-ribose 5-phosphate + AMP + 2 H(+). In terms of biological role, hydrolyzes ADP-ribose (ADPR) to AMP and ribose 5'-phosphate. The sequence is that of ADP-ribose pyrophosphatase, mitochondrial (Nudt9) from Rattus norvegicus (Rat).